We begin with the raw amino-acid sequence, 478 residues long: METLSQRITSMESVQLQGIAVAFVTASALYYVLPAAISHIQLSALPMLGKTEVVVIPPKLLSELSKSPRTLSAEIAGNEFIAGKYTKVKALTPILLHSITKYLIPSLGRNAVVMSEEVSNAVRLGIPTCNDWTGVNIYPKIMRMVTVSTGRFLVGSELNRSEDYIDTVHNYALDVSSAQSAVHKMHPWIRPLLAEWLPEIRRLRKRTEEAFALFESLIKERMKMQRELSESELPDDLLQWMIANRHNYNNEDAHDLVYSQLGLTFTANHSTASTITNALYTLATMGDLIDVIRDDITQALAESGGQFTSKALDSMWKFDSFIKETVRMNPLVMSVAVRKVVEPIKLPSGQVIPTGVTLETPLVAVNLDDQIFPNADVFDPMRFYNLREKDRKQGDAREAEFNQLISSSTSHMSWGFGKHTCPGRAFAAQQIKMILAHIILRYDIKLVGDSTDRYENIPKGHLSLPDPTKDILMKRREI.

A helical transmembrane segment spans residues 20 to 42 (AVAFVTASALYYVLPAAISHIQL). N-linked (GlcNAc...) asparagine glycosylation is found at N159 and N268.

This sequence belongs to the cytochrome P450 family. Requires heme as cofactor.

It localises to the membrane. Its pathway is mycotoxin biosynthesis. Its function is as follows. Cytochrome P450 monooxygenase; part of the core atranone cluster (CAC) which products are predicted to catalyze most or all steps of mycotoxin atranone synthesis, starting from geranylgeranyl pyrophosphate (GGPP). The initial cyclization of GGPP to dolabellane is probably performed by the terpene cyclase ATR13. The Baeyer-Villiger oxidation near the end of the atranone synthesis, which converts atranones D and E to atranones F and G is predicted to be catalyzed by the monooxygenase ATR8. Of the CAC's other predicted gene products, the reducing PKS ATR6 might synthesize a polyketide chain. This polyketide is probably transferred onto the atranone backbone by the polyketide transferase ATR5. Other predicted CAC products include 4 oxygenases (ATR2, ATR3, ATR4, and ATR14), 3 short-chain reductases (ATR7, ATR9, and ATR10), and a methyltransferase (ATR12). These may all be involved in the various steps of atranone biosynthesis, although their specific roles must await experimental determination. In Stachybotrys chlorohalonatus (strain IBT 40285), this protein is Cytochrome P450 monooxygenase ATR3.